A 343-amino-acid chain; its full sequence is Aspartate carbamoyltransferase catalytic subunit (343 aa).

Positions 91 and 92 each coordinate carbamoyl phosphate. Residue Lys-119 coordinates L-aspartate. Positions 141, 171, and 174 each coordinate carbamoyl phosphate. L-aspartate contacts are provided by Arg-204 and Arg-259. Residues Gly-300 and Pro-301 each coordinate carbamoyl phosphate.

Belongs to the aspartate/ornithine carbamoyltransferase superfamily. ATCase family. In terms of assembly, heterododecamer (2C3:3R2) of six catalytic PyrB chains organized as two trimers (C3), and six regulatory PyrI chains organized as three dimers (R2).

It catalyses the reaction carbamoyl phosphate + L-aspartate = N-carbamoyl-L-aspartate + phosphate + H(+). Its pathway is pyrimidine metabolism; UMP biosynthesis via de novo pathway; (S)-dihydroorotate from bicarbonate: step 2/3. Its function is as follows. Catalyzes the condensation of carbamoyl phosphate and aspartate to form carbamoyl aspartate and inorganic phosphate, the committed step in the de novo pyrimidine nucleotide biosynthesis pathway. This chain is Aspartate carbamoyltransferase catalytic subunit, found in Burkholderia thailandensis (strain ATCC 700388 / DSM 13276 / CCUG 48851 / CIP 106301 / E264).